A 591-amino-acid polypeptide reads, in one-letter code: Reduced folate transporter (591 aa).

N-acetylmethionine is present on methionine 1. The Cytoplasmic portion of the chain corresponds to 1–29 (MVPSSPAVEKQVPVEPGPDPELRSWRHLV). At serine 5 the chain carries Phosphoserine. Residues 30 to 50 (CYLCFYGFMAQIRPGESFITP) form a helical membrane-spanning segment. Isoleucine 48 and threonine 49 together coordinate folate. Over 51–64 (YLLGPDKNFTREQV) the chain is Extracellular. Asparagine 58 carries N-linked (GlcNAc...) asparagine glycosylation. The helical transmembrane segment at 65–87 (TNEITPVLSYSYLAVLVPVFLLT) threads the bilayer. The Cytoplasmic portion of the chain corresponds to 88–91 (DYLR). The chain crosses the membrane as a helical span at residues 92–112 (YTPVLLLQGLSFVSVWLLLLL). The Extracellular portion of the chain corresponds to 113-116 (GHSV). The helical transmembrane segment at 117-139 (AHMQLMELFYSVTMAARIAYSSY) threads the bilayer. Residues glutamate 123 and arginine 133 each coordinate folate. 5 residues coordinate 2',3'-cGAMP: arginine 133, isoleucine 134, serine 137, tyrosine 149, and arginine 157. Topologically, residues 140–153 (IFSLVRPARYQRVA) are cytoplasmic. The chain crosses the membrane as a helical span at residues 154–178 (GYSRAAVLLGVFTSSVLGQLLVTVG). Position 164 (valine 164) interacts with folate. At 179-183 (RVSFS) the chain is on the extracellular side. Residues 184-202 (TLNYISLAFLTFSVVLALF) traverse the membrane as a helical segment. Residues 203-266 (LKRPKRSLFF…ELGDSLRRPQ (64 aa)) are Cytoplasmic-facing. Serine 225 carries the post-translational modification Phosphoserine. The chain crosses the membrane as a helical span at residues 267–292 (LRLWSLWWVFNSAGYYLVVYYVHILW). Folate-binding residues include tyrosine 281, tyrosine 282, and tyrosine 286. Tyrosine 282 serves as a coordination point for 2',3'-cGAMP. Residues 293 to 304 (NEVDPTTNSARV) lie on the Extracellular side of the membrane. A helical membrane pass occupies residues 305–327 (YNGAADAASTLLGAITSFAAGFV). 2',3'-cGAMP is bound at residue serine 321. Residues 328–333 (KIRWAR) are Cytoplasmic-facing. A helical transmembrane segment spans residues 334 to 354 (WSKLLIAGVTATQAGLVFLLA). Over 355-360 (HTRHPS) the chain is Extracellular. A helical transmembrane segment spans residues 361 to 384 (SIWLCYAAFVLFRGSYQFLVPIAT). Folate contacts are provided by arginine 373 and glutamine 377. 2',3'-cGAMP contacts are provided by glutamine 377, proline 381, threonine 384, lysine 393, cysteine 396, and phenylalanine 400. Over 385–398 (FQIASSLSKELCAL) the chain is Cytoplasmic. Residues 399–422 (VFGVNTFFATIVKTIITFIVSDVR) traverse the membrane as a helical segment. The tract at residues 407–419 (ATIVKTIITFIVS) is required for substrate-binding. The Extracellular portion of the chain corresponds to 423 to 430 (GLGLPVRK). Residues 431-455 (QFQLYSVYFLILSIIYFLGAMLDGL) form a helical membrane-spanning segment. At 456–591 (RHCQRGHHPR…PSDGVQNVNQ (136 aa)) the chain is on the cytoplasmic side. A phosphoserine mark is found at serine 474, serine 485, serine 499, and serine 503.

The protein belongs to the reduced folate carrier (RFC) transporter (TC 2.A.48) family. In terms of tissue distribution, placenta, liver, and to a much smaller extent, in lung.

Its subcellular location is the cell membrane. The protein resides in the apical cell membrane. It localises to the basolateral cell membrane. The enzyme catalyses 5-amino-1-(5-phospho-beta-D-ribosyl)imidazole-4-carboxamide(in) + (6S)-5-methyl-5,6,7,8-tetrahydrofolate(out) = 5-amino-1-(5-phospho-beta-D-ribosyl)imidazole-4-carboxamide(out) + (6S)-5-methyl-5,6,7,8-tetrahydrofolate(in). It catalyses the reaction 2',3'-cGAMP(out) + 5-amino-1-(5-phospho-beta-D-ribosyl)imidazole-4-carboxamide(in) = 2',3'-cGAMP(in) + 5-amino-1-(5-phospho-beta-D-ribosyl)imidazole-4-carboxamide(out). It carries out the reaction 3',3'-cGAMP(out) + 5-amino-1-(5-phospho-beta-D-ribosyl)imidazole-4-carboxamide(in) = 3',3'-cGAMP(in) + 5-amino-1-(5-phospho-beta-D-ribosyl)imidazole-4-carboxamide(out). Its function is as follows. Antiporter that mediates the import of reduced folates or a subset of cyclic dinucleotides, driven by the export of organic anions. Acts as an importer of immunoreactive cyclic dinucleotides, such as cyclic GMP-AMP (2'-3'-cGAMP), an immune messenger produced in response to DNA virus in the cytosol, and its linkage isomer 3'-3'-cGAMP, thus playing a role in triggering larger immune responses. Mechanistically, acts as a secondary active transporter, which exports intracellular organic anions down their concentration gradients to facilitate the uptake of its substrates. Has high affinity for N5-methyltetrahydrofolate, the predominant circulating form of folate. Also mediates the import of antifolate drug methotrexate. 5-amino-4-imidazolecarboxamide riboside (AICAR), when phosphorylated to AICAR monophosphate, can serve as an organic anion for antiporter activity. The polypeptide is Reduced folate transporter (Homo sapiens (Human)).